A 185-amino-acid polypeptide reads, in one-letter code: Elongation factor P (185 aa).

This sequence belongs to the elongation factor P family.

It localises to the cytoplasm. It participates in protein biosynthesis; polypeptide chain elongation. In terms of biological role, involved in peptide bond synthesis. Stimulates efficient translation and peptide-bond synthesis on native or reconstituted 70S ribosomes in vitro. Probably functions indirectly by altering the affinity of the ribosome for aminoacyl-tRNA, thus increasing their reactivity as acceptors for peptidyl transferase. In Bacillus cereus (strain ATCC 10987 / NRS 248), this protein is Elongation factor P.